Here is a 378-residue protein sequence, read N- to C-terminus: UPF0754 membrane protein BCAH187_A1042 (378 aa).

The next 2 membrane-spanning stretches (helical) occupy residues 1 to 21 and 357 to 377; these read MNIW…GGFT and YLGA…LLFL.

This sequence belongs to the UPF0754 family.

Its subcellular location is the cell membrane. This is UPF0754 membrane protein BCAH187_A1042 from Bacillus cereus (strain AH187).